The sequence spans 440 residues: L-seryl-tRNA(Sec) selenium transferase (440 aa).

K282 is subject to N6-(pyridoxal phosphate)lysine.

This sequence belongs to the SelA family. Pyridoxal 5'-phosphate is required as a cofactor.

The protein resides in the cytoplasm. It catalyses the reaction L-seryl-tRNA(Sec) + selenophosphate + H(+) = L-selenocysteinyl-tRNA(Sec) + phosphate. Its pathway is aminoacyl-tRNA biosynthesis; selenocysteinyl-tRNA(Sec) biosynthesis; selenocysteinyl-tRNA(Sec) from L-seryl-tRNA(Sec) (bacterial route): step 1/1. Its function is as follows. Converts seryl-tRNA(Sec) to selenocysteinyl-tRNA(Sec) required for selenoprotein biosynthesis. In Campylobacter jejuni subsp. jejuni serotype O:2 (strain ATCC 700819 / NCTC 11168), this protein is L-seryl-tRNA(Sec) selenium transferase.